Consider the following 371-residue polypeptide: Thyroid transcription factor 1 (371 aa).

A DNA-binding region (homeobox) is located at residues 161–220; the sequence is RRKRRVLFSQAQVYELERRFKQQKYLSAPEREHLASMIHLTPTQVKIWFQNHRYKMKRQA. 2 disordered regions span residues 219–294 and 308–342; these read QAKD…QQQA and SGGP…ALQG. The span at 233–243 shows a compositional bias: gly residues; the sequence is SGGGGGGGGAG. Low complexity-rich tracts occupy residues 244-253 and 272-294; these read CPQQQQAQQQ and AGAP…QQQA.

Belongs to the NK-2 homeobox family. Phosphorylated on serine residues. In terms of tissue distribution, thyroid, lung and CNS.

The protein localises to the nucleus. Transcription factor that binds and activates the promoter of thyroid specific genes such as thyroglobulin, thyroperoxidase, and thyrotropin receptor. Crucial in the maintenance of the thyroid differentiation phenotype. May play a role in lung development and surfactant homeostasis. The chain is Thyroid transcription factor 1 (TITF1) from Canis lupus familiaris (Dog).